The following is a 358-amino-acid chain: Alanine racemase (358 aa).

Residue lysine 34 is the Proton acceptor; specific for D-alanine of the active site. At lysine 34 the chain carries N6-(pyridoxal phosphate)lysine. Position 129 (arginine 129) interacts with substrate. Tyrosine 254 functions as the Proton acceptor; specific for L-alanine in the catalytic mechanism. Substrate is bound at residue methionine 302.

The protein belongs to the alanine racemase family. Requires pyridoxal 5'-phosphate as cofactor.

The enzyme catalyses L-alanine = D-alanine. It functions in the pathway amino-acid biosynthesis; D-alanine biosynthesis; D-alanine from L-alanine: step 1/1. In terms of biological role, catalyzes the interconversion of L-alanine and D-alanine. May also act on other amino acids. The polypeptide is Alanine racemase (alr) (Hamiltonella defensa subsp. Acyrthosiphon pisum (strain 5AT)).